A 366-amino-acid chain; its full sequence is 3-dehydroquinate synthase (366 aa).

Residues 69 to 74, 103 to 107, 127 to 128, lysine 140, lysine 149, and 167 to 170 each bind NAD(+); these read DGEAHK, GVIGD, TT, and TLNT. Zn(2+) contacts are provided by glutamate 182, histidine 245, and histidine 262.

It belongs to the sugar phosphate cyclases superfamily. Dehydroquinate synthase family. It depends on Co(2+) as a cofactor. The cofactor is Zn(2+). NAD(+) serves as cofactor.

The protein resides in the cytoplasm. The catalysed reaction is 7-phospho-2-dehydro-3-deoxy-D-arabino-heptonate = 3-dehydroquinate + phosphate. It participates in metabolic intermediate biosynthesis; chorismate biosynthesis; chorismate from D-erythrose 4-phosphate and phosphoenolpyruvate: step 2/7. Its function is as follows. Catalyzes the conversion of 3-deoxy-D-arabino-heptulosonate 7-phosphate (DAHP) to dehydroquinate (DHQ). The protein is 3-dehydroquinate synthase of Pseudomonas fluorescens (strain SBW25).